We begin with the raw amino-acid sequence, 301 residues long: GTPase Era (301 aa).

Residues 4–173 (KAGFVALIGK…LECISQHLSP (170 aa)) form the Era-type G domain. The interval 12 to 19 (GKPNAGKS) is G1. 12–19 (GKPNAGKS) contacts GTP. Residues 38-42 (NATRK) are G2. The G3 stretch occupies residues 64–67 (DTPG). GTP contacts are provided by residues 64–68 (DTPGL) and 122–125 (SKID). A G4 region spans residues 122 to 125 (SKID). Positions 152–154 (LSA) are G5. The 77-residue stretch at 204-280 (LSDEIPYESD…FLNLQVIAQK (77 aa)) folds into the KH type-2 domain.

This sequence belongs to the TRAFAC class TrmE-Era-EngA-EngB-Septin-like GTPase superfamily. Era GTPase family. As to quaternary structure, monomer.

It is found in the cytoplasm. The protein localises to the cell inner membrane. Its function is as follows. An essential GTPase that binds both GDP and GTP, with rapid nucleotide exchange. Plays a role in 16S rRNA processing and 30S ribosomal subunit biogenesis and possibly also in cell cycle regulation and energy metabolism. The protein is GTPase Era of Helicobacter pylori (strain ATCC 700392 / 26695) (Campylobacter pylori).